Reading from the N-terminus, the 431-residue chain is Enolase (431 aa).

Residue Q167 coordinates (2R)-2-phosphoglycerate. The active-site Proton donor is E209. 3 residues coordinate Mg(2+): D246, E290, and D317. 4 residues coordinate (2R)-2-phosphoglycerate: K342, R371, S372, and K393. Residue K342 is the Proton acceptor of the active site.

This sequence belongs to the enolase family. Component of the RNA degradosome, a multiprotein complex involved in RNA processing and mRNA degradation. Requires Mg(2+) as cofactor.

It is found in the cytoplasm. Its subcellular location is the secreted. The protein localises to the cell surface. It carries out the reaction (2R)-2-phosphoglycerate = phosphoenolpyruvate + H2O. Its pathway is carbohydrate degradation; glycolysis; pyruvate from D-glyceraldehyde 3-phosphate: step 4/5. In terms of biological role, catalyzes the reversible conversion of 2-phosphoglycerate (2-PG) into phosphoenolpyruvate (PEP). It is essential for the degradation of carbohydrates via glycolysis. The sequence is that of Enolase from Erwinia tasmaniensis (strain DSM 17950 / CFBP 7177 / CIP 109463 / NCPPB 4357 / Et1/99).